A 489-amino-acid chain; its full sequence is Membrane-bound acylglycerophosphatidylinositol O-acyltransferase frj (489 aa).

The next 3 membrane-spanning stretches (helical) occupy residues S2–V22, V40–L60, and L75–F95. Residues N331 and H364 contribute to the active site. Helical transmembrane passes span V405–S425 and F433–F453.

The protein belongs to the membrane-bound acyltransferase family.

The protein resides in the membrane. It carries out the reaction a 1-acyl-sn-glycero-3-phospho-(1D-myo-inositol) + (5Z,8Z,11Z,14Z)-eicosatetraenoyl-CoA = a 1-acyl-2-(5Z,8Z,11Z,14Z-eicosatetraenoyl)-sn-glycero-3-phospho-(1D-myo-inositol) + CoA. It catalyses the reaction a 1-acyl-sn-glycero-3-phosphocholine + an acyl-CoA = a 1,2-diacyl-sn-glycero-3-phosphocholine + CoA. The enzyme catalyses (9Z)-hexadecenoyl-CoA + 1-hexadecanoyl-sn-glycero-3-phosphocholine = 1-hexadecanoyl-2-(9Z-hexadecenoyl)-sn-glycero-3-phosphocholine + CoA. The catalysed reaction is a 1-acyl-sn-glycero-3-phospho-L-serine + an acyl-CoA = a 1,2-diacyl-sn-glycero-3-phospho-L-serine + CoA. It carries out the reaction 1-(9Z-octadecenoyl)-sn-glycero-3-phospho-L-serine + (9Z)-hexadecenoyl-CoA = 1-(9Z-octadecenoyl)-2-(9Z-hexadecenoyl)-sn-glycero-3-phospho-L-serine + CoA. It catalyses the reaction a 1-acyl-sn-glycero-3-phosphoethanolamine + an acyl-CoA = a 1,2-diacyl-sn-glycero-3-phosphoethanolamine + CoA. The enzyme catalyses 1-hexadecanoyl-sn-glycero-3-phosphoethanolamine + (9Z)-hexadecenoyl-CoA = 1-hexadecanoyl-2-(9Z)-hexadecenoyl-sn-glycero-3-phosphoethanolamine + CoA. The protein operates within lipid metabolism; phospholipid metabolism. Its function is as follows. Acyltransferase that mediates the acylation of lysophospholipids to produce phospholipids (glycerophospholipids). Highest activity with lysophosphatidylinositol (1-acyl-sn-glycero-3-phospho-(1D-myo-inositol) or LPI) producing phosphatidylinositol (1,2-diacyl-sn-glycero-3-phospho-(1D-myo-inositol) or PI) (LPIAT activity), but also converts lysophosphatidylcholine (1-acyl-sn-glycero-3-phosphocholine or LPC) to phosphatidylcholine (1,2-diacyl-sn-glycero-3-phosphocholine or PC) (LPCAT activity), lysophosphatidylserine (1-acyl-2-hydroxy-sn-glycero-3-phospho-L-serine or LPS) to phosphatidylserine (1,2-diacyl-sn-glycero-3-phospho-L-serine or PS) (LPSAT activity), and lysophosphatidylethanolamine (1-acyl-sn-glycero-3-phosphoethanolamine or LPE) producing phosphatidylethanolamine (1,2-diacyl-sn-glycero-3-phosphoethanolamine or PE) (LPEAT activity). Has a preference for unsaturated fatty acid arachidonoyl-CoA ((5Z,8Z,11Z,14Z)-eicosatetraenoyl-CoA). Glycerophospholipids are important structural and functional components of cellular membrane, acyl-chain remodeling regulates the molecular species distribution of glycerophospholipids which can affect membrane fluidity and curvature. The sequence is that of Membrane-bound acylglycerophosphatidylinositol O-acyltransferase frj from Drosophila melanogaster (Fruit fly).